The chain runs to 510 residues: Bifunctional purine biosynthesis protein PurH (510 aa).

The MGS-like domain maps to 1 to 143 (MTKRALISVS…KNHDAVLVLV (143 aa)).

The protein belongs to the PurH family.

It catalyses the reaction (6R)-10-formyltetrahydrofolate + 5-amino-1-(5-phospho-beta-D-ribosyl)imidazole-4-carboxamide = 5-formamido-1-(5-phospho-D-ribosyl)imidazole-4-carboxamide + (6S)-5,6,7,8-tetrahydrofolate. The catalysed reaction is IMP + H2O = 5-formamido-1-(5-phospho-D-ribosyl)imidazole-4-carboxamide. Its pathway is purine metabolism; IMP biosynthesis via de novo pathway; 5-formamido-1-(5-phospho-D-ribosyl)imidazole-4-carboxamide from 5-amino-1-(5-phospho-D-ribosyl)imidazole-4-carboxamide (10-formyl THF route): step 1/1. The protein operates within purine metabolism; IMP biosynthesis via de novo pathway; IMP from 5-formamido-1-(5-phospho-D-ribosyl)imidazole-4-carboxamide: step 1/1. The sequence is that of Bifunctional purine biosynthesis protein PurH from Deinococcus radiodurans (strain ATCC 13939 / DSM 20539 / JCM 16871 / CCUG 27074 / LMG 4051 / NBRC 15346 / NCIMB 9279 / VKM B-1422 / R1).